The chain runs to 259 residues: Protoheme IX farnesyltransferase (259 aa).

Helical transmembrane passes span 15–35 (LICLTALLLAAAAAAMINGVL), 61–81 (ATVAAAGMLFAALALSITFLP), 83–103 (LTTALILLAIFSYTPLYTLWF), 109–129 (WGVVPGGIPGALPVLVGASAV), 137–157 (PLILFLVMLLWQPPHFWALAL), 182–202 (VCIFVFAALLLPASLALWFTG), 208–228 (FAIEALCLGFFNLFSCYLYLV), and 236–256 (AFQASIFYLLGLLSAVIIDIC).

This sequence belongs to the UbiA prenyltransferase family. Protoheme IX farnesyltransferase subfamily.

The protein localises to the cell inner membrane. The enzyme catalyses heme b + (2E,6E)-farnesyl diphosphate + H2O = Fe(II)-heme o + diphosphate. It functions in the pathway porphyrin-containing compound metabolism; heme O biosynthesis; heme O from protoheme: step 1/1. Its function is as follows. Converts heme B (protoheme IX) to heme O by substitution of the vinyl group on carbon 2 of heme B porphyrin ring with a hydroxyethyl farnesyl side group. In Geotalea uraniireducens (strain Rf4) (Geobacter uraniireducens), this protein is Protoheme IX farnesyltransferase.